A 353-amino-acid chain; its full sequence is Guanine nucleotide-binding protein G(q) subunit alpha (353 aa).

S-palmitoyl cysteine attachment occurs at residues Cys3 and Cys4. One can recognise a G-alpha domain in the interval 32 to 353 (RELKLLLLGT…QLNLKEYNLV (322 aa)). The G1 motif stretch occupies residues 35 to 48 (KLLLLGTGESGKST). GTP contacts are provided by residues 40 to 47 (GTGESGKS), 174 to 180 (LRVRAPT), 199 to 203 (DVGGQ), 268 to 271 (NKKD), and Ala325. Mg(2+) is bound by residues Ser47 and Thr180. The segment at 172–180 (DILRVRAPT) is G2 motif. A G3 motif region spans residues 195–204 (FRMVDVGGQR). The interval 264 to 271 (ILFLNKKD) is G4 motif. The interval 323–328 (TCATDT) is G5 motif.

It belongs to the G-alpha family. G(q) subfamily. G proteins are composed of 3 units; alpha, beta and gamma. The alpha chain contains the guanine nucleotide binding site.

Functionally, guanine nucleotide-binding proteins (G proteins) are involved as modulators or transducers in various transmembrane signaling systems. The chain is Guanine nucleotide-binding protein G(q) subunit alpha from Homarus americanus (American lobster).